The sequence spans 400 residues: MKRQAKPPEKKTKRTTNASSPTPSSSSPSLSSLPDEIVENCLARISRSYYPTLSIVSKSFRSIISSTELYVARSHLRNTEECVYVCLSDKSFEFPKWFTLWVNPNQANSMVEKKRKKKKTIGKLLVPIPSSNLSPVSKSAIAVGSEIYVIGGKVDGALSSAVRILDCRSNTWRDAPSMTVARKRPFICLYDGKIYVIGGYNKLSESEPWAEVFDIKTQTWECLSDPGTEIRNCTIYRIAEIEGKIHFGYTQKTYAYDPKQGEWECCEGEVAFPRSQCVMESVLYTFANNYTWEDDYGCKWWSTDGYGEKVKGLESLLEIHKRNGGSSDNTTKLVACGGKLLLLWEGYMKHNPNNRKKIWCAVIALEKRDGGKVWGIVEWVDVVHIVPTSCKLLHCLVVSV.

The segment covering 1–10 (MKRQAKPPEK) has biased composition (basic and acidic residues). Residues 1-33 (MKRQAKPPEKKTKRTTNASSPTPSSSSPSLSSL) are disordered. Low complexity predominate over residues 19 to 33 (SSPTPSSSSPSLSSL). Residues 27–73 (SPSLSSLPDEIVENCLARISRSYYPTLSIVSKSFRSIISSTELYVAR) form the F-box domain. Kelch repeat units follow at residues 146–192 (EIYV…LYDG), 194–240 (IYVI…RIAE), and 242–284 (EGKI…SVLY).

This is F-box/kelch-repeat protein At4g19870 from Arabidopsis thaliana (Mouse-ear cress).